A 371-amino-acid chain; its full sequence is Protein NDRG2 (371 aa).

The segment at 1-22 is disordered; it reads MAELQEVQITEEKPLLPGQTPE. Position 2 is an N-acetylalanine (Ala-2). Thr-20 carries the post-translational modification Phosphothreonine. Ser-326 and Ser-328 each carry phosphoserine. Thr-330 is modified (phosphothreonine). At Ser-332 the chain carries Phosphoserine. Thr-334 is modified (phosphothreonine). The tract at residues 334–371 is disordered; that stretch reads TSAASIDGSRSRSRTLSQSSESGTLPSGPPGHTMEVSC. 3 positions are modified to phosphoserine: Ser-335, Ser-338, and Ser-344. Residue Thr-348 is modified to Phosphothreonine. Phosphoserine occurs at positions 350, 352, 353, and 355. Position 357 is a phosphothreonine (Thr-357). Ser-370 bears the Phosphoserine mark.

Belongs to the NDRG family. Broadly expressed, with highest levels in heart, liver, skeletal muscle and aorta.

Its subcellular location is the cytoplasm. It localises to the perinuclear region. The protein localises to the cell projection. It is found in the growth cone. In terms of biological role, contributes to the regulation of the Wnt signaling pathway. Down-regulates CTNNB1-mediated transcriptional activation of target genes, such as CCND1, and may thereby act as tumor suppressor. May be involved in dendritic cell and neuron differentiation. The polypeptide is Protein NDRG2 (Ndrg2) (Rattus norvegicus (Rat)).